We begin with the raw amino-acid sequence, 541 residues long: Chaperonin GroEL (541 aa).

Residues 29-32, 86-90, G413, 478-480, and D494 contribute to the ATP site; these read TLGP, DGTTT, and DAL.

This sequence belongs to the chaperonin (HSP60) family. As to quaternary structure, forms a cylinder of 14 subunits composed of two heptameric rings stacked back-to-back. Interacts with the co-chaperonin GroES.

The protein localises to the cytoplasm. It carries out the reaction ATP + H2O + a folded polypeptide = ADP + phosphate + an unfolded polypeptide.. Functionally, together with its co-chaperonin GroES, plays an essential role in assisting protein folding. The GroEL-GroES system forms a nano-cage that allows encapsulation of the non-native substrate proteins and provides a physical environment optimized to promote and accelerate protein folding. This chain is Chaperonin GroEL, found in Alkaliphilus oremlandii (strain OhILAs) (Clostridium oremlandii (strain OhILAs)).